Reading from the N-terminus, the 133-residue chain is Ribosome-binding factor A (133 aa).

This sequence belongs to the RbfA family. In terms of assembly, monomer. Binds 30S ribosomal subunits, but not 50S ribosomal subunits or 70S ribosomes.

It is found in the cytoplasm. In terms of biological role, one of several proteins that assist in the late maturation steps of the functional core of the 30S ribosomal subunit. Associates with free 30S ribosomal subunits (but not with 30S subunits that are part of 70S ribosomes or polysomes). Required for efficient processing of 16S rRNA. May interact with the 5'-terminal helix region of 16S rRNA. This is Ribosome-binding factor A from Proteus mirabilis (strain HI4320).